The following is a 261-amino-acid chain: 3-methyl-2-oxobutanoate hydroxymethyltransferase (261 aa).

Mg(2+)-binding residues include aspartate 42 and aspartate 81. Residues 42–43 (DS), aspartate 81, and lysine 110 contribute to the 3-methyl-2-oxobutanoate site. Glutamate 112 serves as a coordination point for Mg(2+). Glutamate 179 functions as the Proton acceptor in the catalytic mechanism.

This sequence belongs to the PanB family. As to quaternary structure, homodecamer; pentamer of dimers. Mg(2+) is required as a cofactor.

Its subcellular location is the cytoplasm. The enzyme catalyses 3-methyl-2-oxobutanoate + (6R)-5,10-methylene-5,6,7,8-tetrahydrofolate + H2O = 2-dehydropantoate + (6S)-5,6,7,8-tetrahydrofolate. Its pathway is cofactor biosynthesis; coenzyme A biosynthesis. In terms of biological role, catalyzes the reversible reaction in which hydroxymethyl group from 5,10-methylenetetrahydrofolate is transferred onto alpha-ketoisovalerate to form ketopantoate. This Pyrobaculum islandicum (strain DSM 4184 / JCM 9189 / GEO3) protein is 3-methyl-2-oxobutanoate hydroxymethyltransferase.